A 631-amino-acid polypeptide reads, in one-letter code: tRNA uridine 5-carboxymethylaminomethyl modification enzyme MnmG (631 aa).

FAD contacts are provided by residues 15–20 (GAGHAG), Ile-127, and Ser-182. An NAD(+)-binding site is contributed by 276–290 (GPRYCPSIEDKIVRF). Gln-373 serves as a coordination point for FAD.

It belongs to the MnmG family. As to quaternary structure, homodimer. Heterotetramer of two MnmE and two MnmG subunits. It depends on FAD as a cofactor.

The protein resides in the cytoplasm. Its function is as follows. NAD-binding protein involved in the addition of a carboxymethylaminomethyl (cmnm) group at the wobble position (U34) of certain tRNAs, forming tRNA-cmnm(5)s(2)U34. This chain is tRNA uridine 5-carboxymethylaminomethyl modification enzyme MnmG, found in Streptococcus mutans serotype c (strain ATCC 700610 / UA159).